A 171-amino-acid chain; its full sequence is uncharacterized protein (171 aa).

2 disordered regions span residues 1 to 50 (MSHR…THLS) and 71 to 91 (RIDK…PMMK).

This is an uncharacterized protein from Caenorhabditis elegans.